A 201-amino-acid polypeptide reads, in one-letter code: Probable nicotinate-nucleotide adenylyltransferase (201 aa).

It belongs to the NadD family.

It catalyses the reaction nicotinate beta-D-ribonucleotide + ATP + H(+) = deamido-NAD(+) + diphosphate. It functions in the pathway cofactor biosynthesis; NAD(+) biosynthesis; deamido-NAD(+) from nicotinate D-ribonucleotide: step 1/1. Catalyzes the reversible adenylation of nicotinate mononucleotide (NaMN) to nicotinic acid adenine dinucleotide (NaAD). This is Probable nicotinate-nucleotide adenylyltransferase from Bacteroides fragilis (strain YCH46).